The primary structure comprises 536 residues: Small conductance calcium-activated potassium channel protein 1 (536 aa).

Residues 1 to 90 (MSSRSHNGSV…KPPTVSHRLG (90 aa)) form a disordered region. Over residues 65-75 (QEEEEEEEDED) the composition is skewed to acidic residues. The chain crosses the membrane as a helical span at residues 107–127 (LIFGMFGIVVMVTETELSWGV). A helical membrane pass occupies residues 136-156 (FALKCLISLSTVILLGLVILY). A helical membrane pass occupies residues 224–244 (VLLSIPMFLRLYLLARVMLLH). The chain crosses the membrane as a helical span at residues 273–293 (LMTICPGTVLLVFSISSWIVA). The chain crosses the membrane as a helical span at residues 313–333 (FLGAMWLISITFLSIGYGDMV). The pore-forming intramembrane region spans 342-362 (VCLLTGIMGAGCTALVVAVVA). Residues 380 to 459 (DTQLTKRVKN…LADLAKAQSI (80 aa)) form a calmodulin-binding region. Residues 487–507 (VLGASLQALPSLIAQAICPLP) traverse the membrane as a helical segment. The segment at 514 to 536 (SHLTTAAQSPQSHWLPTTASDCG) is disordered. The span at 515–536 (HLTTAAQSPQSHWLPTTASDCG) shows a compositional bias: polar residues.

Belongs to the potassium channel KCNN family. KCa2.1/KCNN1 subfamily. In terms of assembly, homodimer. Heteromultimer with KCNN2 and KCNN3. The complex is composed of 4 channel subunits each of which binds to a calmodulin subunit which regulates the channel activity through calcium-binding. Interacts with calmodulin. As to expression, widely expressed including brain.

Its subcellular location is the membrane. It localises to the cytoplasm. The protein localises to the myofibril. It is found in the sarcomere. The protein resides in the z line. The catalysed reaction is K(+)(in) = K(+)(out). Its activity is regulated as follows. Inhibited by bee venom neurotoxin apamin. Inhibited by d-tubocurarine and tetraethylammonium (TEA). Functionally, small conductance calcium-activated potassium channel that mediates the voltage-independent transmembrane transfer of potassium across the cell membrane through a constitutive interaction with calmodulin which binds the intracellular calcium allowing its opening. The current is characterized by a voltage-independent activation, an intracellular calcium concentration increase-dependent activation and a single-channel conductance of about 3 picosiemens. Also presents an inwardly rectifying current, thus reducing its already small outward conductance of potassium ions, which is particularly the case when the membrane potential displays positive values, above + 20 mV. Activation is followed by membrane hyperpolarization. Thought to regulate neuronal excitability by contributing to the slow component of synaptic afterhyperpolarization. The sequence is that of Small conductance calcium-activated potassium channel protein 1 from Rattus norvegicus (Rat).